Reading from the N-terminus, the 388-residue chain is uncharacterized protein (388 aa).

The protein localises to the mitochondrion. This is an uncharacterized protein from Dictyostelium citrinum (Slime mold).